The chain runs to 327 residues: Annexin A8 (327 aa).

Annexin repeat units lie at residues 21–92, 93–164, 177–249, and 253–324; these read FNPD…ALMY, PPYS…CLLQ, GLVL…TVVK, and NVHS…NLVG. 4 residues coordinate Ca(2+): Met-266, Gly-268, Gly-270, and Asp-310.

This sequence belongs to the annexin family.

This protein is an anticoagulant protein that acts as an indirect inhibitor of the thromboplastin-specific complex, which is involved in the blood coagulation cascade. The polypeptide is Annexin A8 (Anxa8) (Mus musculus (Mouse)).